A 131-amino-acid chain; its full sequence is Synaptobrevin-like protein (131 aa).

Residues Met-1–Lys-81 are Cytoplasmic-facing. The 61-residue stretch at Arg-18–Lys-78 folds into the v-SNARE coiled-coil homology domain. A helical; Anchor for type IV membrane protein transmembrane segment spans residues Met-82–Val-102. At Ser-103 to Gln-131 the chain is on the vesicular side. The disordered stretch occupies residues Ser-112 to Gln-131. Residues Asp-122 to Gln-131 are compositionally biased toward polar residues.

Belongs to the synaptobrevin family.

It is found in the cytoplasmic vesicle. The protein localises to the secretory vesicle. It localises to the synaptic vesicle membrane. The protein resides in the synapse. Its subcellular location is the synaptosome. Functionally, unknown, but synaptobrevins are presumed to be involved in targeting and fusion of synaptic vesicles with the presynaptic membrane as well as in neurotransmitter release. The sequence is that of Synaptobrevin-like protein from Schistosoma mansoni (Blood fluke).